A 122-amino-acid chain; its full sequence is Large ribosomal subunit protein uL14 (122 aa).

Belongs to the universal ribosomal protein uL14 family. Part of the 50S ribosomal subunit. Forms a cluster with proteins L3 and L19. In the 70S ribosome, L14 and L19 interact and together make contacts with the 16S rRNA in bridges B5 and B8.

Its function is as follows. Binds to 23S rRNA. Forms part of two intersubunit bridges in the 70S ribosome. The polypeptide is Large ribosomal subunit protein uL14 (Acinetobacter baumannii (strain SDF)).